A 326-amino-acid chain; its full sequence is Isopenicillin N synthase (326 aa).

Isopenicillin N-binding residues include arginine 84, tyrosine 88, and tyrosine 186. Arginine 84, tyrosine 88, tyrosine 186, histidine 209, and aspartate 211 together coordinate N-[(5S)-5-amino-5-carboxypentanoyl]-L-cysteinyl-D-valine. In terms of domain architecture, Fe2OG dioxygenase spans 183–283 (LIRYPFLENY…RLSIPFFANL (101 aa)). Fe(2+) is bound by residues histidine 209, aspartate 211, and histidine 265. Arginine 274 lines the 2-oxoglutarate pocket. Serine 276 is an isopenicillin N binding site. Serine 276 contacts N-[(5S)-5-amino-5-carboxypentanoyl]-L-cysteinyl-D-valine.

Belongs to the iron/ascorbate-dependent oxidoreductase family. Fe cation serves as cofactor. It depends on L-ascorbate as a cofactor.

The enzyme catalyses N-[(5S)-5-amino-5-carboxypentanoyl]-L-cysteinyl-D-valine + O2 = isopenicillin N + 2 H2O. It functions in the pathway antibiotic biosynthesis; penicillin G biosynthesis; penicillin G from L-alpha-aminoadipate and L-cysteine and L-valine: step 2/3. Its function is as follows. Removes, in the presence of oxygen, 4 hydrogen atoms from delta-L-(alpha-aminoadipyl)-L-cysteinyl-D-valine (ACV) to form the azetidinone and thiazolidine rings of isopenicillin. This is Isopenicillin N synthase (pcbC) from Lysobacter lactamgenus.